A 272-amino-acid chain; its full sequence is Ribosomal RNA small subunit methyltransferase A (272 aa).

Positions 18, 20, 45, 66, 91, and 113 each coordinate S-adenosyl-L-methionine.

Belongs to the class I-like SAM-binding methyltransferase superfamily. rRNA adenine N(6)-methyltransferase family. RsmA subfamily.

Its subcellular location is the cytoplasm. It carries out the reaction adenosine(1518)/adenosine(1519) in 16S rRNA + 4 S-adenosyl-L-methionine = N(6)-dimethyladenosine(1518)/N(6)-dimethyladenosine(1519) in 16S rRNA + 4 S-adenosyl-L-homocysteine + 4 H(+). In terms of biological role, specifically dimethylates two adjacent adenosines (A1518 and A1519) in the loop of a conserved hairpin near the 3'-end of 16S rRNA in the 30S particle. May play a critical role in biogenesis of 30S subunits. In Yersinia pestis bv. Antiqua (strain Antiqua), this protein is Ribosomal RNA small subunit methyltransferase A.